Consider the following 489-residue polypeptide: Blue-light-activated histidine kinase (489 aa).

The PAS domain maps to 19-93 (ATDPFRAAVE…AIKSAIAAEK (75 aa)). Residue Cys69 is modified to S-4a-FMN cysteine. PAC domains follow at residues 93–147 (KPID…ELEK) and 232–281 (YSIE…NKAL). The HWE histidine kinase domain stretch occupies residues 259–341 (NPLVLGIVQD…LLKENWAGAT (83 aa)). His288 carries the phosphohistidine; by autocatalysis modification.

FMN binds covalently to cysteine after exposure to blue light and this bond is spontaneously broken in the dark.

It carries out the reaction ATP + protein L-histidine = ADP + protein N-phospho-L-histidine.. Photosensitive kinase that is involved in increased bacterial virulence upon exposure to light. Once ejected from an infected animal host, sunlight acts as an environmental signal that increases the virulence of the bacterium, preparing it for infection of the next host. This photoreceptor protein is directly related to the bacterium's survival and replication within host macrophages. This chain is Blue-light-activated histidine kinase, found in Brucella ovis (strain ATCC 25840 / 63/290 / NCTC 10512).